The following is a 130-amino-acid chain: Small ribosomal subunit protein uS9 (130 aa).

The protein belongs to the universal ribosomal protein uS9 family.

The sequence is that of Small ribosomal subunit protein uS9 from Mycoplasmoides gallisepticum (strain R(low / passage 15 / clone 2)) (Mycoplasma gallisepticum).